Here is a 478-residue protein sequence, read N- to C-terminus: Receptor-interacting serine/threonine-protein kinase 3 (478 aa).

S2 bears the Phosphoserine mark. Residues 22 to 290 enclose the Protein kinase domain; that stretch reads LENLGFVGKG…CESKTNNVYI (269 aa). Residues 28–36 and K51 each bind ATP; that span reads VGKGGFGAV. Residue D143 is the Proton acceptor of the active site. Position 165 is a phosphoserine (S165). T185 is modified (phosphothreonine). Phosphoserine; by autocatalysis is present on S201. A Phosphothreonine modification is found at T228. S229 carries the post-translational modification Phosphoserine; by autocatalysis. T254 carries the post-translational modification Phosphothreonine. Phosphoserine occurs at positions 301 and 323. The disordered stretch occupies residues 311–330; that stretch reads RSSDTKLSARESSQKGTEVD. Basic and acidic residues predominate over residues 313–330; sequence SDTKLSARESSQKGTEVD. Residue T335 is modified to Phosphothreonine. A phosphoserine mark is found at S350, S369, and S380. The segment at 362-429 is disordered; that stretch reads ERRGKEASFG…RNSNPWYTWN (68 aa). Residues 376–385 show a composition bias toward polar residues; it reads AGTSSDTLAG. T392 is subject to Phosphothreonine. The segment covering 413–429 has biased composition (polar residues); it reads QRNQGDGRNSNPWYTWN. Residues 437 to 461 carry the RIP homotypic interaction motif (RHIM) motif; that stretch reads LQSIVLNNCSEVQIGQHNCMSVQPR. R474 is modified (omega-N-methylarginine).

It belongs to the protein kinase superfamily. TKL Ser/Thr protein kinase family. In terms of assembly, interacts (via RIP homotypic interaction motif) with RIPK1 (via RIP homotypic interaction motif); this interaction induces RIPK1 phosphorylation and formation of a RIPK1-RIPK3 necrosis-inducing complex. Interacts with MLKL; the interaction is direct and triggers necroptosis. Interacts with ZBP1 (via RIP homotypic interaction motif); interaction with ZBP1 activates RIPK3, triggering necroptosis. Upon TNF-induced necrosis, the RIPK1-RIPK3 dimer further interacts with PGAM5 and MLKL; the formation of this complex leads to PGAM5 phosphorylation and increase in PGAM5 phosphatase activity. Binds TRAF2 and is recruited to the TNFR-1 signaling complex. Interacts with PYGL, GLUL and GLUD1; these interactions result in activation of these metabolic enzymes. Interacts with BIRC2/c-IAP1, BIRC3/c-IAP2 and XIAP/BIRC4. Interacts with ARHGEF2. Interacts with PELI1 (via atypical FHA domain); the phosphorylated form at Thr-185 binds preferentially to PELI1. Interacts with BUB1B, TRAF2 and STUB1. Interacts with CASP6. Component of the AIM2 PANoptosome complex, a multiprotein complex that drives inflammatory cell death (PANoptosis). In terms of processing, RIPK1 and RIPK3 undergo reciprocal auto- and trans-phosphorylation. Autophosphorylated following interaction with ZBP1. Phosphorylation of Ser-201 plays a role in the necroptotic function of RIPK3. Autophosphorylates at Thr-228 and Ser-229 following activation by ZBP1: phosphorylation at these sites is a hallmark of necroptosis and is required for binding MLKL. Phosphorylation at Thr-185 is important for its kinase activity, interaction with PELI1 and for its ability to mediate TNF-induced necroptosis. Polyubiquitinated with 'Lys-48' and 'Lys-63'-linked chains by BIRC2/c-IAP1 and BIRC3/c-IAP2, leading to activation of NF-kappa-B. Ubiquitinated by STUB1 leading to its subsequent proteasome-dependent degradation.

It is found in the cytoplasm. The protein resides in the cytosol. Its subcellular location is the nucleus. The catalysed reaction is L-seryl-[protein] + ATP = O-phospho-L-seryl-[protein] + ADP + H(+). The enzyme catalyses L-threonyl-[protein] + ATP = O-phospho-L-threonyl-[protein] + ADP + H(+). Activity is stimulated by ZBP1, which senses double-stranded Z-RNA structures. RIPK3-dependent necroptosis is inhibited by RIPK1: RIPK1 prevents the ZBP1-induced activation of RIPK3 via FADD-mediated recruitment of CASP8, which cleaves RIPK1 and limits TNF-induced necroptosis. Serine/threonine-protein kinase that activates necroptosis and apoptosis, two parallel forms of cell death. Necroptosis, a programmed cell death process in response to death-inducing TNF-alpha family members, is triggered by RIPK3 following activation by ZBP1. Activated RIPK3 forms a necrosis-inducing complex and mediates phosphorylation of MLKL, promoting MLKL localization to the plasma membrane and execution of programmed necrosis characterized by calcium influx and plasma membrane damage. In addition to TNF-induced necroptosis, necroptosis can also take place in the nucleus in response to orthomyxoviruses infection: following ZBP1 activation, which senses double-stranded Z-RNA structures, nuclear RIPK3 catalyzes phosphorylation and activation of MLKL, promoting disruption of the nuclear envelope and leakage of cellular DNA into the cytosol. Also regulates apoptosis: apoptosis depends on RIPK1, FADD and CASP8, and is independent of MLKL and RIPK3 kinase activity. Phosphorylates RIPK1: RIPK1 and RIPK3 undergo reciprocal auto- and trans-phosphorylation. In some cell types, also able to restrict viral replication by promoting cell death-independent responses. In response to flavivirus infection in neurons, promotes a cell death-independent pathway that restricts viral replication: together with ZBP1, promotes a death-independent transcriptional program that modifies the cellular metabolism via up-regulation expression of the enzyme ACOD1/IRG1 and production of the metabolite itaconate. Itaconate inhibits the activity of succinate dehydrogenase, generating a metabolic state in neurons that suppresses replication of viral genomes. RIPK3 binds to and enhances the activity of three metabolic enzymes: GLUL, GLUD1, and PYGL. These metabolic enzymes may eventually stimulate the tricarboxylic acid cycle and oxidative phosphorylation, which could result in enhanced ROS production. The protein is Receptor-interacting serine/threonine-protein kinase 3 of Rattus norvegicus (Rat).